We begin with the raw amino-acid sequence, 72 residues long: Small ribosomal subunit protein bS18c (72 aa).

It belongs to the bacterial ribosomal protein bS18 family. Part of the 30S ribosomal subunit.

The protein resides in the plastid. It is found in the chloroplast. In Thalassiosira pseudonana (Marine diatom), this protein is Small ribosomal subunit protein bS18c.